We begin with the raw amino-acid sequence, 517 residues long: Cytochrome P450 monooxygenase ausI (517 aa).

The chain crosses the membrane as a helical span at residues 8-28; the sequence is LAPLGQPWIAGLVVVSAVLYL. Cysteine 457 serves as a coordination point for heme.

The protein belongs to the cytochrome P450 family. Heme is required as a cofactor.

Its subcellular location is the membrane. It functions in the pathway secondary metabolite biosynthesis; terpenoid biosynthesis. In terms of biological role, cytochrome P450 monooxygenase; part of the gene cluster that mediates the biosynthesis of calidodehydroaustin, a fungal meroterpenoid. The first step of the pathway is the synthesis of 3,5-dimethylorsellinic acid by the polyketide synthase ausA. 3,5-dimethylorsellinic acid is then prenylated by the polyprenyl transferase ausN. Further epoxidation by the FAD-dependent monooxygenase ausM and cyclization by the probable terpene cyclase ausL lead to the formation of protoaustinoid A. Protoaustinoid A is then oxidized to spiro-lactone preaustinoid A3 by the combined action of the FAD-binding monooxygenases ausB and ausC, and the dioxygenase ausE. Acid-catalyzed keto-rearrangement and ring contraction of the tetraketide portion of preaustinoid A3 by ausJ lead to the formation of preaustinoid A4. The aldo-keto reductase ausK, with the help of ausH, is involved in the next step by transforming preaustinoid A4 into isoaustinone which is in turn hydroxylated by the P450 monooxygenase ausI to form austinolide. The cytochrome P450 monooxygenase ausG modifies austinolide to austinol. Austinol is further acetylated to austin by the O-acetyltransferase ausP, which spontaneously changes to dehydroaustin. The cytochrome P450 monooxygenase ausR then converts dehydroaustin is into 7-dehydrodehydroaustin. The hydroxylation catalyzed by ausR permits the O-acetyltransferase ausQ to add an additional acetyl group to the molecule, leading to the formation of acetoxydehydroaustin. The short chain dehydrogenase ausT catalyzes the reduction of the double bond present between carbon atoms 1 and 2 to convert 7-dehydrodehydroaustin into 1,2-dihydro-7-hydroxydehydroaustin. AusQ catalyzes not only an acetylation reaction but also the addition of the PKS ausV diketide product to 1,2-dihydro-7-hydroxydehydroaustin, forming precalidodehydroaustin. Finally, the iron/alpha-ketoglutarate-dependent dioxygenase converts precalidodehydroaustin into calidodehydroaustin. This Aspergillus calidoustus protein is Cytochrome P450 monooxygenase ausI.